Consider the following 256-residue polypeptide: Non-structural protein 1 (256 aa).

It localises to the host cytoplasm. Its subcellular location is the host perinuclear region. Plays a role in inhibition of the host innate immune system by counteracting the type I interferon signaling. This Infectious salmon anemia virus (isolate Atlantic salmon/Norway/810/9/99) (ISAV) protein is Non-structural protein 1.